The chain runs to 274 residues: Large ribosomal subunit protein uL2 (274 aa).

Disordered regions lie at residues 28–53 (KPYAPLLEKNSKSGGRNNNGRITVRH) and 223–274 (VAMN…RRTK). Low complexity predominate over residues 39–48 (KSGGRNNNGR). A compositionally biased stretch (basic residues) spans 254 to 274 (KGAKTRKNKRTDKFIVRRRTK).

The protein belongs to the universal ribosomal protein uL2 family. Part of the 50S ribosomal subunit. Forms a bridge to the 30S subunit in the 70S ribosome.

Its function is as follows. One of the primary rRNA binding proteins. Required for association of the 30S and 50S subunits to form the 70S ribosome, for tRNA binding and peptide bond formation. It has been suggested to have peptidyltransferase activity; this is somewhat controversial. Makes several contacts with the 16S rRNA in the 70S ribosome. The chain is Large ribosomal subunit protein uL2 from Pseudoalteromonas translucida (strain TAC 125).